The sequence spans 312 residues: 2,3-dihydroxyphenylpropionate/2,3-dihydroxicinnamic acid 1,2-dioxygenase 1 (312 aa).

The active-site Proton donor is the His115. Catalysis depends on His179, which acts as the Proton acceptor.

It belongs to the LigB/MhpB extradiol dioxygenase family. Homotetramer. Fe(2+) serves as cofactor.

It carries out the reaction 3-(2,3-dihydroxyphenyl)propanoate + O2 = (2Z,4E)-2-hydroxy-6-oxonona-2,4-dienedioate + H(+). The catalysed reaction is (2E)-3-(2,3-dihydroxyphenyl)prop-2-enoate + O2 = (2Z,4E,7E)-2-hydroxy-6-oxonona-2,4,7-trienedioate + H(+). The protein operates within aromatic compound metabolism; 3-phenylpropanoate degradation. Its function is as follows. Catalyzes the non-heme iron(II)-dependent oxidative cleavage of 2,3-dihydroxyphenylpropionic acid and 2,3-dihydroxicinnamic acid into 2-hydroxy-6-ketononadienedioate and 2-hydroxy-6-ketononatrienedioate, respectively. This chain is 2,3-dihydroxyphenylpropionate/2,3-dihydroxicinnamic acid 1,2-dioxygenase 1, found in Dechloromonas aromatica (strain RCB).